A 314-amino-acid polypeptide reads, in one-letter code: Zinc transporter ZIP3 (314 aa).

Over 1–3 (MNL) the chain is Extracellular. The chain crosses the membrane as a helical span at residues 4 to 24 (IFAKVLCLLAILVLMMLGSLI). The Cytoplasmic portion of the chain corresponds to 25 to 41 (PVKISEADFDKSSRSRK). Residues 42–62 (ILSLSNSFAGGVFLATCFNAL) traverse the membrane as a helical segment. Residues 63–84 (LPAVREKFFDLLKIGNISTDYP) lie on the Extracellular side of the membrane. The helical transmembrane segment at 85-105 (LAETIMMVGFFLTVFVEQTVM) threads the bilayer. The Cytoplasmic portion of the chain corresponds to 106 to 169 (TFRKEKPSFI…KELSSSSPIR (64 aa)). Residues 170–190 (LFSLVFALSAHSVFEGLALGL) form a helical membrane-spanning segment. Residues 191-196 (QEDGNK) lie on the Extracellular side of the membrane. Residues 197–217 (LLSLFIGVVIHETLVAMALGV) form a helical membrane-spanning segment. Over 218–229 (SMAKVNTHLKDA) the chain is Cytoplasmic. A helical membrane pass occupies residues 230 to 250 (IKMAVLVSTMIPIGIVVGMAI). Residues 251–262 (QSAQNMASSIAS) are Extracellular-facing. A helical transmembrane segment spans residues 263–283 (ALLQGIAGGTFIFVTFFEILV). Residues 284–292 (KELEEKNDR) lie on the Cytoplasmic side of the membrane. The helical transmembrane segment at 293–313 (LLKVLFLVLGYTVLAVLVLFK) threads the bilayer. A topological domain (extracellular) is located at residue W314.

It belongs to the ZIP transporter (TC 2.A.5) family.

The protein localises to the cell membrane. It localises to the apical cell membrane. It catalyses the reaction Zn(2+)(in) = Zn(2+)(out). In terms of biological role, transporter for the divalent cation Zn(2+). Mediates the influx of Zn(2+) into cells from extracellular space. This Xenopus tropicalis (Western clawed frog) protein is Zinc transporter ZIP3 (slc39a3).